Consider the following 393-residue polypeptide: Ninja-family protein 1 (393 aa).

Disordered stretches follow at residues 1–27 (MEGFSRDLLCGIGKGDAPPPEKRPGQL) and 155–200 (NDDW…KEMN). Residues 156–170 (DDWKKRKEAQSLKRL) are compositionally biased toward basic and acidic residues.

Belongs to the Ninja family.

It is found in the nucleus. This Zea mays (Maize) protein is Ninja-family protein 1.